The primary structure comprises 64 residues: Large ribosomal subunit protein uL30 (64 aa).

The protein belongs to the universal ribosomal protein uL30 family. Part of the 50S ribosomal subunit.

The polypeptide is Large ribosomal subunit protein uL30 (Syntrophus aciditrophicus (strain SB)).